The primary structure comprises 359 residues: Heat-inducible transcription repressor HrcA (359 aa).

Belongs to the HrcA family.

Its function is as follows. Negative regulator of class I heat shock genes (grpE-dnaK-dnaJ and groELS operons). Prevents heat-shock induction of these operons. This Roseiflexus castenholzii (strain DSM 13941 / HLO8) protein is Heat-inducible transcription repressor HrcA.